Here is a 128-residue protein sequence, read N- to C-terminus: Small ribosomal subunit protein bS6 (128 aa).

The tract at residues 97 to 128 (TTPSPMMKEEKSRSLTAAPATDEAKPAEAESA) is disordered. Residues 118-128 (DEAKPAEAESA) show a composition bias toward basic and acidic residues.

This sequence belongs to the bacterial ribosomal protein bS6 family.

Its function is as follows. Binds together with bS18 to 16S ribosomal RNA. This is Small ribosomal subunit protein bS6 from Aromatoleum aromaticum (strain DSM 19018 / LMG 30748 / EbN1) (Azoarcus sp. (strain EbN1)).